A 115-amino-acid polypeptide reads, in one-letter code: Na(+)/H(+) antiporter subunit C1 (115 aa).

The next 3 helical transmembrane spans lie at 1–21, 28–48, and 72–92; these read MEIL…YLIL, IIIG…TMGG, and LILT…VLAF.

This sequence belongs to the CPA3 antiporters (TC 2.A.63) subunit C family. In terms of assembly, may form a heterooligomeric complex that consists of seven subunits: mnhA1, mnhB1, mnhC1, mnhD1, mnhE1, mnhF1 and mnhG1.

The protein resides in the cell membrane. Functionally, mnh complex is a Na(+)/H(+) antiporter involved in Na(+) excretion. The sequence is that of Na(+)/H(+) antiporter subunit C1 (mnhC1) from Staphylococcus saprophyticus subsp. saprophyticus (strain ATCC 15305 / DSM 20229 / NCIMB 8711 / NCTC 7292 / S-41).